A 545-amino-acid chain; its full sequence is Glucans biosynthesis protein G (545 aa).

The signal sequence occupies residues 1-35; it reads MIRVSSAVQRHAQKLIVLFSLLFGASLLMSDNGFA.

Belongs to the OpgD/OpgG family.

Its subcellular location is the periplasm. It functions in the pathway glycan metabolism; osmoregulated periplasmic glucan (OPG) biosynthesis. Its function is as follows. Involved in the biosynthesis of osmoregulated periplasmic glucans (OPGs). This chain is Glucans biosynthesis protein G, found in Vibrio cholerae serotype O1 (strain ATCC 39541 / Classical Ogawa 395 / O395).